We begin with the raw amino-acid sequence, 281 residues long: Putative pyruvate, phosphate dikinase regulatory protein (281 aa).

153–160 (GISRTSKT) contributes to the ADP binding site.

Belongs to the pyruvate, phosphate/water dikinase regulatory protein family. PDRP subfamily.

It carries out the reaction N(tele)-phospho-L-histidyl/L-threonyl-[pyruvate, phosphate dikinase] + ADP = N(tele)-phospho-L-histidyl/O-phospho-L-threonyl-[pyruvate, phosphate dikinase] + AMP + H(+). It catalyses the reaction N(tele)-phospho-L-histidyl/O-phospho-L-threonyl-[pyruvate, phosphate dikinase] + phosphate + H(+) = N(tele)-phospho-L-histidyl/L-threonyl-[pyruvate, phosphate dikinase] + diphosphate. Bifunctional serine/threonine kinase and phosphorylase involved in the regulation of the pyruvate, phosphate dikinase (PPDK) by catalyzing its phosphorylation/dephosphorylation. The chain is Putative pyruvate, phosphate dikinase regulatory protein from Bdellovibrio bacteriovorus (strain ATCC 15356 / DSM 50701 / NCIMB 9529 / HD100).